A 617-amino-acid chain; its full sequence is MNQPAADMYYSQHMSAGQAPPPQTVTSGAMSYHSQHPPLQPTHMPQYAPQPQYSQYGYANGLTSPQSAQPASQMGQNVLPLPGVATQGFQGFDTTGQVAPPGMKPRVTATLWEDEGSLCFQVEARGICVARREDNHMINGTKLLNVAGMTRGRRDGILKSEKVRHVVKIGPMHLKGVWIPFERALDFANKEKITELLYPLFVHNIGALLYHPTNQTRTNQVMAAAERRKQEQNQMRGAPQTGAPGLPSIQQHHHHMSLPGPQQSLPSHAQMGRPSLDRAHTFPTPPTSASSVMGGNMNASDSGFQWAQGQGMGSAQGANPMSIDTGLSNARSMPATPASTPPGTTIQNMQSYQSGAQQYDNSRPMYNPSAQQSPYQATNPASQDRPVYGQPDPYAKNDMGPPTTRPATSGAPQDQKPANGIIHADQSGGQPAGDEEAEHDHDAEYTHDSGAYDASRASYNYSAPAVGNLPAEHQHLSPEMTGSPSHPPASGRATPRTAAAPQPYYSQQAGYNTPPRVPQQPSSNLYNVMSNDRGTAAGAGTGDVYQPQADMGSMSNGYASQMNGAGGIKRGRDEDDDLQRPSSGGGMDLKRRKTLLDSQVPAMAYAPPVMAQQPRRR.

The segment at 1-79 is disordered; that stretch reads MNQPAADMYY…PASQMGQNVL (79 aa). Residues 24 to 34 are compositionally biased toward polar residues; the sequence is TVTSGAMSYHS. Low complexity predominate over residues 45–58; it reads PQYAPQPQYSQYGY. Residues 61-76 are compositionally biased toward polar residues; that stretch reads GLTSPQSAQPASQMGQ. Residues 106-212 enclose the HTH APSES-type domain; it reads RVTATLWEDE…HNIGALLYHP (107 aa). The H-T-H motif DNA-binding region spans 140-161; it reads GTKLLNVAGMTRGRRDGILKSE. 3 disordered regions span residues 223 to 274, 300 to 451, and 463 to 617; these read AAAE…MGRP, SDSG…DSGA, and APAV…PRRR. 2 stretches are compositionally biased toward low complexity: residues 305 to 318 and 334 to 345; these read QWAQ…AQGA and PATPASTPPGTT. Composition is skewed to polar residues over residues 346 to 361 and 368 to 382; these read IQNM…QYDN and PSAQ…NPAS. Residues 438–447 show a composition bias toward basic and acidic residues; sequence EHDHDAEYTH. Positions 488-509 are enriched in low complexity; that stretch reads PASGRATPRTAAAPQPYYSQQA. Composition is skewed to polar residues over residues 519 to 533 and 553 to 563; these read QQPS…SNDR and SMSNGYASQMN. Positions 569–593 are nuclear localization domain; the sequence is KRGRDEDDDLQRPSSGGGMDLKRRK. A compositionally biased stretch (low complexity) spans 599 to 617; sequence QVPAMAYAPPVMAQQPRRR.

The protein belongs to the EFG1/PHD1/stuA family.

It is found in the nucleus. Its function is as follows. Transcription factor that regulates asexual reproduction. Binds the StuA-response elements (StRE) with the consensus sequence 5'-(A/T)CGCG(T/A)N(A/C)-3' at the promoters of target genes. Required for the formation of aerial hyphae, efficient conidiation, and the formation of perithecia. Essential for the generation of normal turgor pressure within the appressorium. Required for infection of intact apple fruit and penetration of onion epidermal cells. The polypeptide is Cell pattern formation-associated protein STUA (Colletotrichum gloeosporioides (Anthracnose fungus)).